The chain runs to 123 residues: Large ribosomal subunit protein uL14 (123 aa).

Belongs to the universal ribosomal protein uL14 family. In terms of assembly, part of the 50S ribosomal subunit. Forms a cluster with proteins L3 and L19. In the 70S ribosome, L14 and L19 interact and together make contacts with the 16S rRNA in bridges B5 and B8.

In terms of biological role, binds to 23S rRNA. Forms part of two intersubunit bridges in the 70S ribosome. The polypeptide is Large ribosomal subunit protein uL14 (Wigglesworthia glossinidia brevipalpis).